We begin with the raw amino-acid sequence, 495 residues long: COP9 signalosome complex subunit 2 (495 aa).

Residues 1–26 (MGDEYMDDDEDYGFEYEDDSGSEPDV) are disordered. The PCI domain maps to 254–416 (AHTDFFEAFK…GMIEMPKNKK (163 aa)). The interval 426-468 (PNAGDQGTTKSDSKPGTSSEPSTTTSVTSSILQGPPATSSCHQ) is disordered. Polar residues predominate over residues 430-441 (DQGTTKSDSKPG). The segment covering 442–455 (TSSEPSTTTSVTSS) has biased composition (low complexity).

Belongs to the CSN2 family. In terms of assembly, component of the CSN complex, probably composed of csn-1, csn-2, csn-3, csn-4, csn-5, csn-6 and csn-7. Within the complex it probably interacts directly with csn-1, csn-3 and csn-4.

The protein resides in the cytoplasm. The protein localises to the nucleus. In terms of biological role, essential component of the COP9 signalosome complex (CSN), a complex involved in various cellular and developmental processes. The CSN complex is an essential regulator of the ubiquitin (Ubl) conjugation pathway by mediating the deneddylation of the cullin subunits of the SCF-type E3 ligase complexes, leading to decrease the Ubl ligase activity of SCF. The CSN complex plays an essential role in embryogenesis and oogenesis and is required to regulate microtubule stability in the early embryo. Mediates mei-3/katanin targeting for degradation at the meiosis to mitosis transition via deneddylation of cul-3. The sequence is that of COP9 signalosome complex subunit 2 (csn-2) from Caenorhabditis elegans.